Consider the following 373-residue polypeptide: Sensor protein DegM (373 aa).

4 helical membrane passes run 27–47, 57–77, 91–111, and 122–142; these read ILLA…AIAV, LFLL…LCVN, YASL…LYLI, and VAGW…TYLF. The Histidine kinase domain maps to 170 to 370; it reads SIAHEVRNPL…KVVLSLPIEK (201 aa). His-173 carries the post-translational modification Phosphohistidine; by autocatalysis.

It is found in the cell membrane. The catalysed reaction is ATP + protein L-histidine = ADP + protein N-phospho-L-histidine.. Its function is as follows. Involved in a sensory transduction pathway that enhances the production of minor proteases. The sequence is that of Sensor protein DegM (degM) from Bacillus sp. (strain B21-2).